The chain runs to 207 residues: Ribonuclease HII (207 aa).

Residues 5 to 207 enclose the RNase H type-2 domain; sequence PLIIGVDEAG…APVRALLRPC (203 aa). A divalent metal cation contacts are provided by Asp-11, Glu-12, and Asp-117.

This sequence belongs to the RNase HII family. Mn(2+) serves as cofactor. The cofactor is Mg(2+).

Its subcellular location is the cytoplasm. It catalyses the reaction Endonucleolytic cleavage to 5'-phosphomonoester.. Functionally, endonuclease that specifically degrades the RNA of RNA-DNA hybrids. In Hyphomonas neptunium (strain ATCC 15444), this protein is Ribonuclease HII.